The primary structure comprises 178 residues: Ribosome maturation factor RimM (178 aa).

The PRC barrel domain occupies 101–178; that stretch reads TDEYYWYQLV…VMRVEWDADF (78 aa).

This sequence belongs to the RimM family. As to quaternary structure, binds ribosomal protein uS19.

It localises to the cytoplasm. Functionally, an accessory protein needed during the final step in the assembly of 30S ribosomal subunit, possibly for assembly of the head region. Essential for efficient processing of 16S rRNA. May be needed both before and after RbfA during the maturation of 16S rRNA. It has affinity for free ribosomal 30S subunits but not for 70S ribosomes. The chain is Ribosome maturation factor RimM from Pseudomonas entomophila (strain L48).